Reading from the N-terminus, the 468-residue chain is Lipase 1 (468 aa).

The first 16 residues, 1 to 16 (MRGIAVFLAFISLIFA), serve as a signal peptide directing secretion. N-linked (GlcNAc...) asparagine glycosylation occurs at N79. A disulfide bond links C112 and C285. Residue S196 is the Charge relay system of the active site. Residues N231 and N319 are each glycosylated (N-linked (GlcNAc...) asparagine). Residues D348 and H381 each act as charge relay system in the active site. C364 and C409 are disulfide-bonded. 3 N-linked (GlcNAc...) asparagine glycosylation sites follow: N417, N422, and N451.

It belongs to the AB hydrolase superfamily. Lipase family. Class Lip subfamily.

It is found in the secreted. It catalyses the reaction a triacylglycerol + H2O = a diacylglycerol + a fatty acid + H(+). Functionally, secreted lipase that is able to hydrolyze both the neutral triacylglycerols and the monopalmitate ester Tween 40, allowing the use of hydrolyzed products as carbon sources. Has broad lipolytic activity, which may be important for colonization and subsequent infection, therefore contributing to the persistence and virulence in human tissue. The polypeptide is Lipase 1 (Candida albicans (strain SC5314 / ATCC MYA-2876) (Yeast)).